Reading from the N-terminus, the 204-residue chain is MIGHLTGRLVEKHPPEILLDVQGVGYELLLPMTSFYQLPDIGQQTALFTHLVVREDAHLLFGFSQKTDRTLFRELIKTNGVGPKLALAILSAMSVEEFAYAIEREELSKLVKIPGVGKKTAERLLVELKGKFKGIQQEDFFIESQHLKQPEHALNEQDIPASEAISALIALGYKAAEAEKLVKKISKPALSSEQLIREALKAAL.

The tract at residues 1-64 is domain I; the sequence is MIGHLTGRLV…EDAHLLFGFS (64 aa). Positions 65-143 are domain II; sequence QKTDRTLFRE…GIQQEDFFIE (79 aa). Positions 144–155 are flexible linker; that stretch reads SQHLKQPEHALN. Residues 156–204 form a domain III region; that stretch reads EQDIPASEAISALIALGYKAAEAEKLVKKISKPALSSEQLIREALKAAL.

The protein belongs to the RuvA family. Homotetramer. Forms an RuvA(8)-RuvB(12)-Holliday junction (HJ) complex. HJ DNA is sandwiched between 2 RuvA tetramers; dsDNA enters through RuvA and exits via RuvB. An RuvB hexamer assembles on each DNA strand where it exits the tetramer. Each RuvB hexamer is contacted by two RuvA subunits (via domain III) on 2 adjacent RuvB subunits; this complex drives branch migration. In the full resolvosome a probable DNA-RuvA(4)-RuvB(12)-RuvC(2) complex forms which resolves the HJ.

Its subcellular location is the cytoplasm. Functionally, the RuvA-RuvB-RuvC complex processes Holliday junction (HJ) DNA during genetic recombination and DNA repair, while the RuvA-RuvB complex plays an important role in the rescue of blocked DNA replication forks via replication fork reversal (RFR). RuvA specifically binds to HJ cruciform DNA, conferring on it an open structure. The RuvB hexamer acts as an ATP-dependent pump, pulling dsDNA into and through the RuvAB complex. HJ branch migration allows RuvC to scan DNA until it finds its consensus sequence, where it cleaves and resolves the cruciform DNA. This Pasteurella multocida (strain Pm70) protein is Holliday junction branch migration complex subunit RuvA.